The primary structure comprises 226 residues: Amelogenin (226 aa).

The N-terminal stretch at 1-16 is a signal peptide; that stretch reads MGTWILFACLLGTAFA. The residue at position 32 (Ser-32) is a Phosphoserine. Positions 86 to 196 are disordered; the sequence is QQHPPSHTTL…LPPQQALPPM (111 aa). Low complexity-rich tracts occupy residues 88 to 120 and 137 to 182; these read HPPS…MPVP and PTSQ…SPLH. A compositionally biased stretch (pro residues) spans 183 to 192; sequence PIQPLPPQQA.

This sequence belongs to the amelogenin family.

It is found in the secreted. The protein resides in the extracellular space. It localises to the extracellular matrix. In terms of biological role, plays a role in the biomineralization of teeth. Seems to regulate the formation of crystallites during the secretory stage of tooth enamel development. Thought to play a major role in the structural organization and mineralization of developing enamel. This chain is Amelogenin (AMEL), found in Cavia porcellus (Guinea pig).